A 454-amino-acid polypeptide reads, in one-letter code: Ornithine aminotransferase (454 aa).

The residue at position 280 (K280) is an N6-(pyridoxal phosphate)lysine.

The protein belongs to the class-III pyridoxal-phosphate-dependent aminotransferase family. Requires pyridoxal 5'-phosphate as cofactor.

It localises to the cytoplasm. It carries out the reaction a 2-oxocarboxylate + L-ornithine = L-glutamate 5-semialdehyde + an L-alpha-amino acid. It functions in the pathway amino-acid biosynthesis; L-proline biosynthesis; L-glutamate 5-semialdehyde from L-ornithine: step 1/1. The sequence is that of Ornithine aminotransferase (otaA) from Emericella nidulans (strain FGSC A4 / ATCC 38163 / CBS 112.46 / NRRL 194 / M139) (Aspergillus nidulans).